A 180-amino-acid chain; its full sequence is Large ribosomal subunit protein uL5 (180 aa).

Belongs to the universal ribosomal protein uL5 family. In terms of assembly, part of the 50S ribosomal subunit; part of the 5S rRNA/L5/L18/L25 subcomplex. Contacts the 5S rRNA and the P site tRNA. Forms a bridge to the 30S subunit in the 70S ribosome.

Its function is as follows. This is one of the proteins that bind and probably mediate the attachment of the 5S RNA into the large ribosomal subunit, where it forms part of the central protuberance. In the 70S ribosome it contacts protein S13 of the 30S subunit (bridge B1b), connecting the 2 subunits; this bridge is implicated in subunit movement. Contacts the P site tRNA; the 5S rRNA and some of its associated proteins might help stabilize positioning of ribosome-bound tRNAs. This Leuconostoc citreum (strain KM20) protein is Large ribosomal subunit protein uL5.